The sequence spans 1009 residues: Cilia- and flagella-associated protein 70 (1009 aa).

Residues 410–428 (NLKEDKPVKEKDIDGRPRP) show a composition bias toward basic and acidic residues. Positions 410–457 (NLKEDKPVKEKDIDGRPRPGDVQAPSIKSQSSDTPLEGEPPLSHNPEG) are disordered. 7 TPR repeats span residues 498–531 (PPLT…EYYR), 635–668 (SEQL…EPQN), 669–702 (LDHW…NQSH), 704–736 (HSLL…EPTN), 888–921 (HFIF…SPSC), 923–954 (TWLG…NNYN), and 956–988 (EVWA…KLKD).

It belongs to the CFAP70 family.

The protein resides in the cell projection. It is found in the cilium. The protein localises to the flagellum. It localises to the cytoplasm. Its subcellular location is the cytoskeleton. The protein resides in the flagellum basal body. It is found in the cilium axoneme. Axoneme-binding protein that plays a role in the regulation of ciliary motility and cilium length. This chain is Cilia- and flagella-associated protein 70, found in Macaca fascicularis (Crab-eating macaque).